Reading from the N-terminus, the 71-residue chain is MKLCVTFLLVLVILPSVTGVKSSERTLSGAALRGDRGTCSGRGQECKHDSDCCGHLCCAGITCQFTYIPCK.

A signal peptide spans 1 to 19 (MKLCVTFLLVLVILPSVTG). A propeptide spanning residues 20–47 (VKSSERTLSGAALRGDRGTCSGRGQECK) is cleaved from the precursor. 4 disulfide bridges follow: C39–C53, C46–C58, C52–C63, and C57–C70.

This sequence belongs to the I1 superfamily. In terms of tissue distribution, expressed by the venom duct.

The protein localises to the secreted. The protein is Conotoxin Tx11.3 of Conus textile (Cloth-of-gold cone).